A 334-amino-acid polypeptide reads, in one-letter code: 4-hydroxy-2-methyl-3-oxo-4-farnesyl-3,4-dihydroquinoline-1-oxide ketoreductase (334 aa).

Catalysis depends on Tyr-139, which acts as the Proton donor.

The protein belongs to the 3-beta-HSD family.

The enzyme catalyses aurachin B + NAD(+) + H2O = 4-hydroxy-2-methyl-3-oxo-4-[(2E,6E)-farnesyl]-3,4-dihydroquinoline 1-oxide + NADH. It catalyses the reaction 3,4-dihydroxy-2-methyl-4-[(2E,6E)-farnesyl]-3,4-dihydroquinoline 1-oxide + NAD(+) = 4-hydroxy-2-methyl-3-oxo-4-[(2E,6E)-farnesyl]-3,4-dihydroquinoline 1-oxide + NADH + H(+). Ketoreductase that catalyzes the final step in the conversion of aurachin C to aurachin B. Catalyzes the reduction of 4-hydroxy-2-methyl-3-oxo-4-[(2E,6E)-farnesyl]-3,4-dihydroquinoline-1-oxide to form 3,4-dihydroxy-2-methyl-4-[(2E,6E)-farnesyl]-3,4-dihydroquinoline 1-oxide, which then undergoes a spontaneous dehydration to form aurachin B. Accepts both NADH and NADPH, but has a preference for NADH. In Stigmatella aurantiaca, this protein is 4-hydroxy-2-methyl-3-oxo-4-farnesyl-3,4-dihydroquinoline-1-oxide ketoreductase.